Reading from the N-terminus, the 214-residue chain is MHDISSLTTRTKTLPPLRVGVGGPVGSGKTTLLEMVCKAMYPQFDLIAITNDIYTKEDQRLLTLSGALPPERILGVETGGCPHTAIREDASINLIAIDQMLEQFPDADIVFVESGGDNLAATFSPELSDLTLYIIDVASGEKIPRKGGPGITKSDLFIINKTDLAPYVGADLAVMEADTRRMRGDKPFVMCNLKTGDGLDQVIAFLKTEGLFRG.

23-30 serves as a coordination point for GTP; that stretch reads GPVGSGKT.

This sequence belongs to the SIMIBI class G3E GTPase family. UreG subfamily. In terms of assembly, homodimer. UreD, UreF and UreG form a complex that acts as a GTP-hydrolysis-dependent molecular chaperone, activating the urease apoprotein by helping to assemble the nickel containing metallocenter of UreC. The UreE protein probably delivers the nickel.

It is found in the cytoplasm. Its function is as follows. Facilitates the functional incorporation of the urease nickel metallocenter. This process requires GTP hydrolysis, probably effectuated by UreG. The sequence is that of Urease accessory protein UreG from Bordetella bronchiseptica (strain ATCC BAA-588 / NCTC 13252 / RB50) (Alcaligenes bronchisepticus).